The following is a 412-amino-acid chain: Argininosuccinate synthase (412 aa).

10 to 18 is an ATP binding site; the sequence is AYSGGLDTS. Residue Tyr89 participates in L-citrulline binding. Gly119 is a binding site for ATP. Residues Thr121, Asn125, and Asp126 each coordinate L-aspartate. Asn125 is an L-citrulline binding site. Residues Arg129, Ser177, Glu261, and Tyr273 each coordinate L-citrulline.

It belongs to the argininosuccinate synthase family. Type 1 subfamily. As to quaternary structure, homotetramer.

It is found in the cytoplasm. It catalyses the reaction L-citrulline + L-aspartate + ATP = 2-(N(omega)-L-arginino)succinate + AMP + diphosphate + H(+). The protein operates within amino-acid biosynthesis; L-arginine biosynthesis; L-arginine from L-ornithine and carbamoyl phosphate: step 2/3. This chain is Argininosuccinate synthase, found in Bifidobacterium longum subsp. infantis (strain ATCC 15697 / DSM 20088 / JCM 1222 / NCTC 11817 / S12).